The following is a 380-amino-acid chain: E3 ubiquitin-protein ligase Iruka (380 aa).

The tract at residues 50–92 (APEMDSSTAGASGSARSGSSGSGSSGSHDTLSRGSSSSGSQVN) is disordered. Low complexity-rich tracts occupy residues 55-68 (SSTA…RSGS) and 74-89 (SGSH…SSGS). The RING-type; atypical zinc-finger motif lies at 253-294 (CSICWDDFKIDETVRKLPCSHLYHENCIVPWLNLHSTCPICR). Residues 317–367 (EMAADGSNSERRSASTATGTDNPSPANNPSQAAAEGGRTRPDANPAQAARN) are disordered. The segment covering 338-350 (NPSPANNPSQAAA) has biased composition (low complexity).

Interacts (via N-terminus) with CG7546 (via Ubl domain).

It catalyses the reaction S-ubiquitinyl-[E2 ubiquitin-conjugating enzyme]-L-cysteine + [acceptor protein]-L-lysine = [E2 ubiquitin-conjugating enzyme]-L-cysteine + N(6)-ubiquitinyl-[acceptor protein]-L-lysine.. The protein operates within protein modification; protein ubiquitination. Its function is as follows. E3 ubiquitin-protein ligase that mediates E2-dependent, 'Lys-48'- and/or 'Lys-63'-linked polyubiquitination of substrates. Recognizes miRNA-empty Ago1 and triggers its degradation via polyubiquitination independently of the Bag6 complex. By targeting miRNA-empty Ago1, eliminates dysfunctional Ago1 not able to bind miRNA and thereby plays a role in the quality control of miRNA-mediated silencing. The protein is E3 ubiquitin-protein ligase Iruka of Drosophila melanogaster (Fruit fly).